A 209-amino-acid chain; its full sequence is Urease accessory protein UreG (209 aa).

14 to 21 (GPVGSGKT) contributes to the GTP binding site.

Belongs to the SIMIBI class G3E GTPase family. UreG subfamily. As to quaternary structure, homodimer. UreD, UreF and UreG form a complex that acts as a GTP-hydrolysis-dependent molecular chaperone, activating the urease apoprotein by helping to assemble the nickel containing metallocenter of UreC. The UreE protein probably delivers the nickel.

The protein resides in the cytoplasm. In terms of biological role, facilitates the functional incorporation of the urease nickel metallocenter. This process requires GTP hydrolysis, probably effectuated by UreG. The chain is Urease accessory protein UreG from Rhodopseudomonas palustris (strain ATCC BAA-98 / CGA009).